The sequence spans 271 residues: Elongation factor Ts (271 aa).

The tract at residues 76–79 (TDFV) is involved in Mg(2+) ion dislocation from EF-Tu.

It belongs to the EF-Ts family.

The protein resides in the cytoplasm. In terms of biological role, associates with the EF-Tu.GDP complex and induces the exchange of GDP to GTP. It remains bound to the aminoacyl-tRNA.EF-Tu.GTP complex up to the GTP hydrolysis stage on the ribosome. This is Elongation factor Ts from Saccharopolyspora erythraea (strain ATCC 11635 / DSM 40517 / JCM 4748 / NBRC 13426 / NCIMB 8594 / NRRL 2338).